We begin with the raw amino-acid sequence, 194 residues long: ATP-dependent Clp protease proteolytic subunit (194 aa).

The active-site Nucleophile is the Ser-98. His-123 is a catalytic residue.

This sequence belongs to the peptidase S14 family. In terms of assembly, fourteen ClpP subunits assemble into 2 heptameric rings which stack back to back to give a disk-like structure with a central cavity, resembling the structure of eukaryotic proteasomes.

The protein resides in the cytoplasm. The enzyme catalyses Hydrolysis of proteins to small peptides in the presence of ATP and magnesium. alpha-casein is the usual test substrate. In the absence of ATP, only oligopeptides shorter than five residues are hydrolyzed (such as succinyl-Leu-Tyr-|-NHMec, and Leu-Tyr-Leu-|-Tyr-Trp, in which cleavage of the -Tyr-|-Leu- and -Tyr-|-Trp bonds also occurs).. Functionally, cleaves peptides in various proteins in a process that requires ATP hydrolysis. Has a chymotrypsin-like activity. Plays a major role in the degradation of misfolded proteins. The protein is ATP-dependent Clp protease proteolytic subunit of Clostridium botulinum (strain Hall / ATCC 3502 / NCTC 13319 / Type A).